We begin with the raw amino-acid sequence, 309 residues long: Ribosomal RNA small subunit methyltransferase H (309 aa).

S-adenosyl-L-methionine-binding positions include 30 to 32 (GGH), Asp-50, Phe-74, Asp-96, and Gln-103.

The protein belongs to the methyltransferase superfamily. RsmH family.

The protein localises to the cytoplasm. It carries out the reaction cytidine(1402) in 16S rRNA + S-adenosyl-L-methionine = N(4)-methylcytidine(1402) in 16S rRNA + S-adenosyl-L-homocysteine + H(+). Specifically methylates the N4 position of cytidine in position 1402 (C1402) of 16S rRNA. The chain is Ribosomal RNA small subunit methyltransferase H from Wigglesworthia glossinidia brevipalpis.